We begin with the raw amino-acid sequence, 267 residues long: Chaperone protein MyfB (267 aa).

Residues 1-34 form the signal peptide; the sequence is MKYKFSHNFISYNLFLFVFMSLILLPYSHASSMG. Residues Cys127 and Cys164 are joined by a disulfide bond.

This sequence belongs to the periplasmic pilus chaperone family.

It localises to the periplasm. Required for the biogenesis of the MyfA fimbria. This is Chaperone protein MyfB (myfB) from Yersinia enterocolitica.